Consider the following 476-residue polypeptide: tRNA(Ile)-lysidine synthase (476 aa).

Position 30–35 (30–35 (SGGPDS)) interacts with ATP.

This sequence belongs to the tRNA(Ile)-lysidine synthase family.

It is found in the cytoplasm. The catalysed reaction is cytidine(34) in tRNA(Ile2) + L-lysine + ATP = lysidine(34) in tRNA(Ile2) + AMP + diphosphate + H(+). Functionally, ligates lysine onto the cytidine present at position 34 of the AUA codon-specific tRNA(Ile) that contains the anticodon CAU, in an ATP-dependent manner. Cytidine is converted to lysidine, thus changing the amino acid specificity of the tRNA from methionine to isoleucine. This Bacillus thuringiensis subsp. konkukian (strain 97-27) protein is tRNA(Ile)-lysidine synthase.